Here is a 195-residue protein sequence, read N- to C-terminus: 3-hydroxyanthranilate 3,4-dioxygenase (195 aa).

R50 provides a ligand contact to O2. Residues H54, E60, and H102 each coordinate Fe cation. Position 60 (E60) interacts with substrate. Residues R106 and E116 each coordinate substrate. Residues C131, C136, C170, and C173 each coordinate a divalent metal cation.

It belongs to the 3-HAO family. It depends on Fe(2+) as a cofactor.

Its subcellular location is the cytoplasm. The catalysed reaction is 3-hydroxyanthranilate + O2 = (2Z,4Z)-2-amino-3-carboxymuconate 6-semialdehyde. It functions in the pathway cofactor biosynthesis; NAD(+) biosynthesis; quinolinate from L-kynurenine: step 3/3. Catalyzes the oxidative ring opening of 3-hydroxyanthranilate to 2-amino-3-carboxymuconate semialdehyde, which spontaneously cyclizes to quinolinate. In Aspergillus terreus (strain NIH 2624 / FGSC A1156), this protein is 3-hydroxyanthranilate 3,4-dioxygenase (bna1).